The chain runs to 299 residues: Delta-9 desaturase-like 3 protein (299 aa).

2 helical membrane passes run 38–57 (AVGAVHLLCLLAPFNYTWEA) and 58–76 (FRFAAMVGISTNLSITFSY). Positions 77 to 82 (HRNLTH) match the Histidine box-1 motif. The Histidine box-2 motif lies at 114–118 (HRFHH). A run of 2 helical transmembrane segments spans residues 174–194 (IGLHILTFWILVYLWGGLPYL) and 198–218 (VGVGGAIGYHATWLINSACHI). Residues 246–250 (HNNHH) carry the Histidine box-3 motif. A helical membrane pass occupies residues 262–282 (WYQVDLTWYLIWFFQVLGLAT).

This sequence belongs to the fatty acid desaturase type 1 family. The cofactor is Fe cation.

It localises to the endoplasmic reticulum membrane. It participates in lipid metabolism; polyunsaturated fatty acid biosynthesis. In Arabidopsis thaliana (Mouse-ear cress), this protein is Delta-9 desaturase-like 3 protein.